Consider the following 463-residue polypeptide: Glutamyl-tRNA reductase (463 aa).

Substrate is bound by residues 49 to 52, Ser-109, 114 to 116, and Gln-120; these read TCNR and EQQ. Catalysis depends on Cys-50, which acts as the Nucleophile. NADP(+) is bound at residue 196–201; the sequence is GAGAMS.

It belongs to the glutamyl-tRNA reductase family. As to quaternary structure, homodimer.

It catalyses the reaction (S)-4-amino-5-oxopentanoate + tRNA(Glu) + NADP(+) = L-glutamyl-tRNA(Glu) + NADPH + H(+). The protein operates within porphyrin-containing compound metabolism; protoporphyrin-IX biosynthesis; 5-aminolevulinate from L-glutamyl-tRNA(Glu): step 1/2. In terms of biological role, catalyzes the NADPH-dependent reduction of glutamyl-tRNA(Glu) to glutamate 1-semialdehyde (GSA). In Corynebacterium glutamicum (strain ATCC 13032 / DSM 20300 / JCM 1318 / BCRC 11384 / CCUG 27702 / LMG 3730 / NBRC 12168 / NCIMB 10025 / NRRL B-2784 / 534), this protein is Glutamyl-tRNA reductase.